The following is a 204-amino-acid chain: Probable nicotinate-nucleotide adenylyltransferase (204 aa).

The protein belongs to the NadD family.

The enzyme catalyses nicotinate beta-D-ribonucleotide + ATP + H(+) = deamido-NAD(+) + diphosphate. It functions in the pathway cofactor biosynthesis; NAD(+) biosynthesis; deamido-NAD(+) from nicotinate D-ribonucleotide: step 1/1. In terms of biological role, catalyzes the reversible adenylation of nicotinate mononucleotide (NaMN) to nicotinic acid adenine dinucleotide (NaAD). This chain is Probable nicotinate-nucleotide adenylyltransferase, found in Dehalococcoides mccartyi (strain CBDB1).